The sequence spans 338 residues: Decarboxylase macB (338 aa).

Residues histidine 7, histidine 9, histidine 159, and aspartate 283 each contribute to the Zn(2+) site.

It belongs to the metallo-dependent hydrolases superfamily. ACMSD family.

It carries out the reaction 6-methylsalicylate + H(+) = 3-methylphenol + CO2. Its pathway is secondary metabolite biosynthesis; terpenoid biosynthesis. Functionally, decarboxylase; part of the gene cluster that mediates the biosynthesis of macrophorins, isoprenoid epoxycyclohexenones containing cyclized drimane moieties. The first step of the pathway is the synthesis of 6-methylsalicylic acid (6-MSA) by the polyketide synthase macA. 6-MSA is then converted to m-cresol by the decarboxylase macB. The cytochrome P450 monooxygenase macC then catalyzes the oxidation of m-cresol to toluquinol. Epoxidation of toluquinol is then performed by the short chain dehydrogenase macD, with the help of macE, and a further prenylation by macG leads to 7-deacetoxyyanuthone A. The next step is the hydroxylation of C-22 of 7-deacetoxyyanuthone A by the cytochrome P450 monooxygenase macH to yield 22-deacetylyanuthone A. O-Mevalon transferase macI then attaches mevalon to the hydroxyl group of 22-deacetylyanuthone A to produce yanuthone E. The terpene cyclase macJ catalyzes the cyclization of 22-deacetylyanuthone A to macrophorin A. MacJ is also able to catalyze cyclization of yanuthone E and 7-deacetoxyyanuthone A to their corresponding macrophorins. The macJ products can be further modified by macH and macJ, as well as by the FAD-dependent monooxygenase macF, to produce additional macrophorins, including 4'-oxomacrophorin A, 4'-oxomacrophorin D and 4'-oxomacrophorin E. The polypeptide is Decarboxylase macB (Penicillium terrestre).